Consider the following 249-residue polypeptide: Cis-4-hydroxycyclohexanecarboxylate dehydrogenase (249 aa).

Positions 38, 63, 64, 90, 156, 160, 189, and 191 each coordinate NAD(+). Tyr156 acts as the Proton acceptor in catalysis.

It belongs to the short-chain dehydrogenases/reductases (SDR) family. In terms of assembly, homotetramer.

It catalyses the reaction cis-4-hydroxycyclohexane-1-carboxylate + NAD(+) = 4-oxocyclohexane-1-carboxylate + NADH + H(+). Functionally, dehydrogenase involved in a cyclohexanecarboxylate (CHCA) degradation pathway. Catalyzes the NAD(+)-dependent dehydrogenation of cis-4-hydroxycyclohexanecarboxylate (cis-4-hydroxyCHCA) to form 4-oxocyclohexanecarboxylate (4-oxoCHCA). Is highly specific for the cis-4-hydroxy derivative and shows only weak activity with trans-4-hydroxyCHCA. Cannot use NADP(+). This is Cis-4-hydroxycyclohexanecarboxylate dehydrogenase from Sinomonas cyclohexanicum (Corynebacterium cyclohexanicum).